The chain runs to 496 residues: Glutamyl-tRNA(Gln) amidotransferase subunit A, mitochondrial (496 aa).

Catalysis depends on charge relay system residues lysine 75 and serine 162. The active-site Acyl-ester intermediate is serine 186.

This sequence belongs to the amidase family. GatA subfamily. As to quaternary structure, subunit of the heterotrimeric GatCAB amidotransferase (AdT) complex, composed of A, B and C subunits.

Its subcellular location is the mitochondrion. It catalyses the reaction L-glutamyl-tRNA(Gln) + L-glutamine + ATP + H2O = L-glutaminyl-tRNA(Gln) + L-glutamate + ADP + phosphate + H(+). Functionally, allows the formation of correctly charged Gln-tRNA(Gln) through the transamidation of misacylated Glu-tRNA(Gln) in the mitochondria. The reaction takes place in the presence of glutamine and ATP through an activated gamma-phospho-Glu-tRNA(Gln). This chain is Glutamyl-tRNA(Gln) amidotransferase subunit A, mitochondrial, found in Pediculus humanus subsp. corporis (Body louse).